Here is a 263-residue protein sequence, read N- to C-terminus: 3-deoxy-manno-octulosonate cytidylyltransferase 2 (263 aa).

The protein belongs to the KdsB family.

The protein resides in the cytoplasm. It carries out the reaction 3-deoxy-alpha-D-manno-oct-2-ulosonate + CTP = CMP-3-deoxy-beta-D-manno-octulosonate + diphosphate. It participates in nucleotide-sugar biosynthesis; CMP-3-deoxy-D-manno-octulosonate biosynthesis; CMP-3-deoxy-D-manno-octulosonate from 3-deoxy-D-manno-octulosonate and CTP: step 1/1. Its pathway is bacterial outer membrane biogenesis; lipopolysaccharide biosynthesis. Its function is as follows. Activates KDO (a required 8-carbon sugar) for incorporation into bacterial lipopolysaccharide in Gram-negative bacteria. In Paraburkholderia phytofirmans (strain DSM 17436 / LMG 22146 / PsJN) (Burkholderia phytofirmans), this protein is 3-deoxy-manno-octulosonate cytidylyltransferase 2.